The following is a 348-amino-acid chain: Sorbitol dehydrogenase (348 aa).

Cysteine 40, histidine 65, and glutamate 66 together coordinate Zn(2+). Residues isoleucine 179, aspartate 199, arginine 204, 269-271 (VGI), and 293-295 (SFR) each bind NAD(+). Arginine 295 serves as a coordination point for substrate.

It belongs to the zinc-containing alcohol dehydrogenase family. As to quaternary structure, homotetramer. Zn(2+) is required as a cofactor.

It catalyses the reaction xylitol + NAD(+) = D-xylulose + NADH + H(+). The catalysed reaction is L-iditol + NAD(+) = keto-L-sorbose + NADH + H(+). The enzyme catalyses keto-D-fructose + NADH + H(+) = D-sorbitol + NAD(+). Functionally, polyol dehydrogenase that catalyzes the reversible NAD(+)-dependent oxidation of various sugar alcohols. Is active with xylitol, L-iditol and D-sorbitol (D-glucitol) as substrates, leading to the C2-oxidized products D-xylulose, L-sorbose and D-fructose, respectively. Is a key enzyme in the polyol pathway that interconverts glucose and fructose via sorbitol, which constitutes an important alternate route for glucose metabolism. In Bombyx mori (Silk moth), this protein is Sorbitol dehydrogenase (SDH).